The sequence spans 276 residues: NADPH-dependent 7-cyano-7-deazaguanine reductase (276 aa).

Position 83-85 (83-85 (IES)) interacts with substrate. 85 to 86 (SK) is a binding site for NADPH. Catalysis depends on Cys-184, which acts as the Thioimide intermediate. Residue Asp-191 is the Proton donor of the active site. Position 223–224 (223–224 (HE)) interacts with substrate. 252 to 253 (RG) is a binding site for NADPH.

This sequence belongs to the GTP cyclohydrolase I family. QueF type 2 subfamily. Homodimer.

It is found in the cytoplasm. It carries out the reaction 7-aminomethyl-7-carbaguanine + 2 NADP(+) = 7-cyano-7-deazaguanine + 2 NADPH + 3 H(+). It participates in tRNA modification; tRNA-queuosine biosynthesis. Catalyzes the NADPH-dependent reduction of 7-cyano-7-deazaguanine (preQ0) to 7-aminomethyl-7-deazaguanine (preQ1). The sequence is that of NADPH-dependent 7-cyano-7-deazaguanine reductase from Pseudomonas entomophila (strain L48).